The sequence spans 145 residues: Basic phospholipase A2 cPt10 (145 aa).

A signal peptide spans 1 to 21 (MYPAHLLVLLAVCVSLLGASA). Positions 22–27 (IPPLPL) are excised as a propeptide. 7 disulfides stabilise this stretch: cysteine 38-cysteine 98, cysteine 54-cysteine 144, cysteine 56-cysteine 72, cysteine 71-cysteine 125, cysteine 78-cysteine 118, cysteine 87-cysteine 111, and cysteine 105-cysteine 116. Ca(2+) contacts are provided by tyrosine 55, glycine 57, and glycine 59. Residue histidine 75 is part of the active site. Aspartate 76 contacts Ca(2+). Residue aspartate 119 is part of the active site.

It belongs to the phospholipase A2 family. Group I subfamily. D49 sub-subfamily. Ca(2+) serves as cofactor. As to expression, expressed by the venom gland.

The protein localises to the secreted. It carries out the reaction a 1,2-diacyl-sn-glycero-3-phosphocholine + H2O = a 1-acyl-sn-glycero-3-phosphocholine + a fatty acid + H(+). In terms of biological role, PLA2 catalyzes the calcium-dependent hydrolysis of the 2-acyl groups in 3-sn-phosphoglycerides. The protein is Basic phospholipase A2 cPt10 of Laticauda semifasciata (Black-banded sea krait).